Here is a 341-residue protein sequence, read N- to C-terminus: Major histocompatibility complex class I-related protein 1 (341 aa).

The signal sequence occupies residues 1–22 (MGELMAFLLPLIIVLMVKHSDS). The interval 23 to 109 (RTHSLRYFRL…KRLQRHYNHS (87 aa)) is alpha-1. Residues 23–201 (RTHSLRYFRL…EYGKDTLQRT (179 aa)) are antigen-binding cleft. The Extracellular portion of the chain corresponds to 23–302 (RTHSLRYFRL…QESETIPLVM (280 aa)). Arg31, Ser46, and Lys65 together coordinate 5-(2-oxoethylideneamino)-6-(D-ribitylamino)uracil. 3 residues coordinate 5-(2-oxopropylideneamino)-6-(D-ribitylamino)uracil: Arg31, Ser46, and Lys65. Residues Arg31, Ser46, and Lys65 each coordinate 7-hydroxy-6-methyl-8-(1-D-ribityl)lumazine. Residue Arg31 coordinates 8-(9H-purin-6-yl)-2-oxa-8-azabicyclo[3.3.1]nona-3,6-diene-4,6-dicarbaldehyde. Residues Lys65 and His80 each contribute to the 8-(9H-purin-6-yl)-2-oxa-8-azabicyclo[3.3.1]nona-3,6-diene-4,6-dicarbaldehyde site. Lys65 contacts 2-amino-4-oxopteridine-6-carbaldehyde. Lys65 serves as a coordination point for pyridoxal. The N-linked (GlcNAc...) asparagine glycan is linked to Asn107. Residues 110-201 (GSHTYQRMIG…EYGKDTLQRT (92 aa)) are alpha-2. 3 residues coordinate 5-(2-oxoethylideneamino)-6-(D-ribitylamino)uracil: Arg116, Tyr174, and Gln175. Positions 116, 174, and 175 each coordinate 5-(2-oxopropylideneamino)-6-(D-ribitylamino)uracil. 7-hydroxy-6-methyl-8-(1-D-ribityl)lumazine-binding residues include Arg116, Tyr174, and Gln175. Arg116 is an 8-(9H-purin-6-yl)-2-oxa-8-azabicyclo[3.3.1]nona-3,6-diene-4,6-dicarbaldehyde binding site. Intrachain disulfides connect Cys120–Cys183 and Cys222–Cys278. The tract at residues 202–293 (EPPLVRVNRK…GVHMVLQVPQ (92 aa)) is alpha-3. The 97-residue stretch at 203–299 (PPLVRVNRKE…QVPQESETIP (97 aa)) folds into the Ig-like C1-type domain. A connecting peptide region spans residues 294-302 (ESETIPLVM). A helical membrane pass occupies residues 303 to 323 (KAVSGSIVLVIVLAGVGVLVW). Topologically, residues 324–341 (RRRPREQNGAIYLPTPDR) are cytoplasmic.

The protein belongs to the MHC class I family. In terms of assembly, heterotrimer that consists of MR1, B2M and a metabolite antigen. Major classes of metabolite ligands presented by MR1 include riboflavin-related antigens, pyrimidines and ribityl lumazines, nucleobase adducts and folate derivatives. Forms reversible covalent Schiff base complexes with microbial pyrimidine-based metabolite, which serves as a molecular switch triggering complete folding, stable association with B2M and translocation of the ternary complex from endoplasmic reticulum to the plasma membrane. Alternatively, forms non-Schiff base complexes with ribityl lumazines. On antigen-presenting cells, the ternary complex interacts with TCR on MR1-restricted T cells, predominantly represented by CD8-positive and CD4- and CD8-double negative MAIT cell subsets. Interacts with TAPBP and TAPBPL chaperones in the endoplasmic reticulum. TAPBP associated or not with MHC class I peptide loading complex binds ligand-free MR1 or MR1-B2M complex, providing for stable MR1 pools ready for metabolite antigen processing. TAPBPL interacts with MR1 in a ligand-independent way; this interaction may stabilize MR1 pool and facilitate ligand loading and dissociation. MR1-B2M heterodimer adopts a topology similar to classical MHC class I molecules, with alpha-1 and alpha-2 domains of MR1 forming the antigen-binding cleft composed of two alpha-helices resting on a floor of 7-stranded anti-parallel beta-pleated sheet. The ribityl moiety of pyrimidine-based antigens is recognized by Tyr-95 residue in the CDR3 alpha loop of the invariant TRAV1-2 TCR. As to quaternary structure, homodimerizes and does not associate with B2M. Post-translationally, N-glycosylated. In terms of tissue distribution, ubiquitous. Low expression is detected in peripheral blood B cells, T cells, monocytes and in bronchial epithelial cells (at protein level). Expressed in plasmablasts or plasma B cells in the lamina propria of ileum, appendix and colon (at protein level). Highly expressed on a subset of CD45-positive CD3-positive thymocytes (at protein level).

It is found in the cell membrane. It localises to the endoplasmic reticulum membrane. The protein resides in the golgi apparatus membrane. The protein localises to the early endosome membrane. Its subcellular location is the late endosome membrane. It is found in the secreted. With respect to regulation, inhibited by pterin-based metabolites such as 6-formylpterin (6-FP, a product of folic acid photodegradation). 6-FP competitively inhibits MAIT cell activation by 5-OP-RU. Modulated by commonly prescribed anti-inflammatory drug metabolites. Inhibited by salicilates such as 3-formylsalicylic and 5-formylsalicylic acids. Activated by diclofenac and/or its hydroxy metabolites. In terms of biological role, antigen-presenting molecule specialized in displaying microbial pyrimidine-based metabolites to alpha-beta T cell receptors (TCR) on innate-type mucosal-associated invariant T (MAIT) cells. In complex with B2M preferentially presents riboflavin-derived metabolites to semi-invariant TRAV1.2 TCRs on MAIT cells, guiding immune surveillance of the microbial metabolome at mucosal epithelial barriers. Signature pyrimidine-based microbial antigens are generated via non-enzymatic condensation of metabolite intermediates of the riboflavin pathway with by-products arising from other metabolic pathways such as glycolysis. Typical potent antigenic metabolites are 5-(2-oxoethylideneamino)-6-D-ribitylaminouracil (5-OE-RU) and 5-(2-oxopropylideneamino)-6-D-ribitylaminouracil (5-OP-RU), products of condensation of 5-amino-6-D-ribityaminouracil (5-A-RU) with glyoxal or methylglyoxal by-products, respectively. May present microbial antigens to various TRAV1-2-negative MAIT cell subsets, providing for unique recognition of diverse microbes, including pathogens that do not synthesize riboflavin. Upon antigen recognition, elicits rapid innate-type MAIT cell activation to eliminate pathogenic microbes by directly killing infected cells. During T cell development, drives thymic selection and post-thymic terminal differentiation of MAIT cells in a process dependent on commensal microflora. Acts as an immune sensor of cancer cell metabolome. May present a tumor-specific or -associated metabolite essential for cancer cell survival to a 'pan-cancer' TCR consisting of TRAV38.2-DV8*TRAJ31 alpha chain paired with a TRBV25.1*TRBJ2.3 beta chain on a non-MAIT CD8-positive T cell clone (MC.7.G5), triggering T cell-mediated killing of a wide range of cancer cell types. Its function is as follows. Allele MR1*01: Presents microbial-derived metabolite 5-OP-RU to semi-invariant TRAV1.2-TRAJ33-TRBV6.1 (A-F7) TCR on MAIT cells. Presents nucleobase carbonyl adducts generated during oxidative stress. Captures M3Ade, a nucleobase adduct composed of one adenine modified by a malondialdehyde trimer, for recognition by MR1-restricted T cell clones expressing a polyclonal TCR repertoire. Displays moderate binding affinity toward tumor-enriched pyridoxal and pyridoxal 5'-phosphate antigens. Allele MR1*04: Presents tumor-enriched metabolite pyridoxal to pan-cancer 7.G5 TCR on T cells enabling preferential recognition of cancer cells. May act as an alloantigen. This Homo sapiens (Human) protein is Major histocompatibility complex class I-related protein 1.